The chain runs to 318 residues: CMRF35-like molecule 8 (318 aa).

A signal peptide spans 1-27 (MTQLASAVWLPTLLLLLLLFWLPGCVP). The 102-residue stretch at 28-129 (LHGPSTMSGS…FDGSLGFDKY (102 aa)) folds into the Ig-like V-type domain. Over 28-185 (LHGPSTMSGS…HDYSQGLRLP (158 aa)) the chain is Extracellular. An intrachain disulfide couples Cys-46 to Cys-113. N-linked (GlcNAc...) asparagine glycosylation is present at Asn-93. The segment covering 139–148 (SEDPVSSPGP) has biased composition (low complexity). A disordered region spans residues 139 to 174 (SEDPVSSPGPTLETPVVSTSLPTKGPALGSNTEGHR). A helical transmembrane segment spans residues 186 to 206 (ALLSVLALLLFLLVGTSLLAW). Topologically, residues 207–318 (RMFQKRLVKA…PRKGLSDLYL (112 aa)) are cytoplasmic. A compositionally biased stretch (polar residues) spans 284–296 (QDSHANGDSLHQP). The segment at 284-318 (QDSHANGDSLHQPQDQKAEYSEIQKPRKGLSDLYL) is disordered. A compositionally biased stretch (basic and acidic residues) spans 297 to 308 (QDQKAEYSEIQK). Tyr-303 bears the Phosphotyrosine mark.

The protein belongs to the CD300 family. Upon tyrosine-phosphorylation, interacts with PTN6/SHP-1 and PTPN11/SHP-2 and INPP5D. In terms of processing, phosphorylated on tyrosine. Post-translationally, N-glycosylated. Present on the surface of the majority of myeloid cells and a subset of B-cells. Present on the surface of NK cells after IL-12 stimulation.

It is found in the cell membrane. Functionally, inhibitory receptor which may contribute to the down-regulation of cytolytic activity in natural killer (NK) cells, and to the down-regulation of mast cell degranulation. Negatively regulates the Toll-like receptor (TLR) signaling mediated by MYD88 but not TRIF through activation of PTPN6. This is CMRF35-like molecule 8 (Cd300a) from Mus musculus (Mouse).